Consider the following 628-residue polypeptide: UvrABC system protein C (628 aa).

Residues 20–99 (TSAGVYLMRD…IKTHKPRYNV (80 aa)) form the GIY-YIG domain. In terms of domain architecture, UVR spans 209–244 (AELLAQLEDQMQTAAAAMNFEHAARLRDRITGLNQL).

This sequence belongs to the UvrC family. As to quaternary structure, interacts with UvrB in an incision complex.

It is found in the cytoplasm. Its function is as follows. The UvrABC repair system catalyzes the recognition and processing of DNA lesions. UvrC both incises the 5' and 3' sides of the lesion. The N-terminal half is responsible for the 3' incision and the C-terminal half is responsible for the 5' incision. The polypeptide is UvrABC system protein C (Gloeobacter violaceus (strain ATCC 29082 / PCC 7421)).